The following is a 451-amino-acid chain: Probable glycine dehydrogenase (decarboxylating) subunit 1 (451 aa).

It belongs to the GcvP family. N-terminal subunit subfamily. The glycine cleavage system is composed of four proteins: P, T, L and H. In this organism, the P 'protein' is a heterodimer of two subunits.

The catalysed reaction is N(6)-[(R)-lipoyl]-L-lysyl-[glycine-cleavage complex H protein] + glycine + H(+) = N(6)-[(R)-S(8)-aminomethyldihydrolipoyl]-L-lysyl-[glycine-cleavage complex H protein] + CO2. In terms of biological role, the glycine cleavage system catalyzes the degradation of glycine. The P protein binds the alpha-amino group of glycine through its pyridoxal phosphate cofactor; CO(2) is released and the remaining methylamine moiety is then transferred to the lipoamide cofactor of the H protein. The protein is Probable glycine dehydrogenase (decarboxylating) subunit 1 of Staphylococcus aureus (strain MSSA476).